The following is a 499-amino-acid chain: Bifunctional purine biosynthesis protein PurH (499 aa).

An MGS-like domain is found at 1–144 (MIKRALISVF…KNFKDVVVLT (144 aa)).

The protein belongs to the PurH family.

The catalysed reaction is (6R)-10-formyltetrahydrofolate + 5-amino-1-(5-phospho-beta-D-ribosyl)imidazole-4-carboxamide = 5-formamido-1-(5-phospho-D-ribosyl)imidazole-4-carboxamide + (6S)-5,6,7,8-tetrahydrofolate. It carries out the reaction IMP + H2O = 5-formamido-1-(5-phospho-D-ribosyl)imidazole-4-carboxamide. Its pathway is purine metabolism; IMP biosynthesis via de novo pathway; 5-formamido-1-(5-phospho-D-ribosyl)imidazole-4-carboxamide from 5-amino-1-(5-phospho-D-ribosyl)imidazole-4-carboxamide (10-formyl THF route): step 1/1. The protein operates within purine metabolism; IMP biosynthesis via de novo pathway; IMP from 5-formamido-1-(5-phospho-D-ribosyl)imidazole-4-carboxamide: step 1/1. This chain is Bifunctional purine biosynthesis protein PurH, found in Clostridium botulinum (strain Okra / Type B1).